We begin with the raw amino-acid sequence, 590 residues long: Aspartate--tRNA(Asp/Asn) ligase (590 aa).

An L-aspartate-binding site is contributed by Glu175. An aspartate region spans residues 199–202; that stretch reads QQYK. The L-aspartate site is built by Arg221 and His450. 221-223 is a binding site for ATP; the sequence is RDE. Glu484 contributes to the ATP binding site. Arg491 serves as a coordination point for L-aspartate. 536-539 is a binding site for ATP; it reads GVDR.

Belongs to the class-II aminoacyl-tRNA synthetase family. Type 1 subfamily. In terms of assembly, homodimer.

The protein localises to the cytoplasm. The enzyme catalyses tRNA(Asx) + L-aspartate + ATP = L-aspartyl-tRNA(Asx) + AMP + diphosphate. Its function is as follows. Aspartyl-tRNA synthetase with relaxed tRNA specificity since it is able to aspartylate not only its cognate tRNA(Asp) but also tRNA(Asn). Reaction proceeds in two steps: L-aspartate is first activated by ATP to form Asp-AMP and then transferred to the acceptor end of tRNA(Asp/Asn). This chain is Aspartate--tRNA(Asp/Asn) ligase, found in Bradyrhizobium sp. (strain BTAi1 / ATCC BAA-1182).